The following is a 241-amino-acid chain: Proteasome subunit alpha (241 aa).

Belongs to the peptidase T1A family. As to quaternary structure, the 20S proteasome core is composed of 14 alpha and 14 beta subunits that assemble into four stacked heptameric rings, resulting in a barrel-shaped structure. The two inner rings, each composed of seven catalytic beta subunits, are sandwiched by two outer rings, each composed of seven alpha subunits. The catalytic chamber with the active sites is on the inside of the barrel. Has a gated structure, the ends of the cylinder being occluded by the N-termini of the alpha-subunits. Is capped by the proteasome-associated ATPase, ARC.

The protein localises to the cytoplasm. It participates in protein degradation; proteasomal Pup-dependent pathway. Its activity is regulated as follows. The formation of the proteasomal ATPase ARC-20S proteasome complex, likely via the docking of the C-termini of ARC into the intersubunit pockets in the alpha-rings, may trigger opening of the gate for substrate entry. Interconversion between the open-gate and close-gate conformations leads to a dynamic regulation of the 20S proteasome proteolysis activity. Functionally, component of the proteasome core, a large protease complex with broad specificity involved in protein degradation. The sequence is that of Proteasome subunit alpha from Frankia alni (strain DSM 45986 / CECT 9034 / ACN14a).